Consider the following 171-residue polypeptide: Small ribosomal subunit protein mS41 (171 aa).

Residues 1–23 (MSLFKSLVARSGSGIRAAQIARQ) constitute a mitochondrion transit peptide. Residues 122–141 (REHKKGKKKNGGERNAKTVL) form a disordered region.

The protein belongs to the mitochondrion-specific ribosomal protein mS41 family.

The protein localises to the mitochondrion. Functionally, involved in telomere length regulation. This chain is Small ribosomal subunit protein mS41 (FYV4), found in Scheffersomyces stipitis (strain ATCC 58785 / CBS 6054 / NBRC 10063 / NRRL Y-11545) (Yeast).